Reading from the N-terminus, the 284-residue chain is Acetyl-coenzyme A carboxylase carboxyl transferase subunit beta (284 aa).

One can recognise a CoA carboxyltransferase N-terminal domain in the interval 27 to 284; sequence LMTKCPSCKY…ELHDGGVRHV (258 aa). Residues Cys-31, Cys-34, Cys-50, and Cys-52 each contribute to the Zn(2+) site. Residues 31–52 form a C4-type zinc finger; it reads CPSCKYMHYTKQLNENHKVCDC.

The protein belongs to the AccD/PCCB family. In terms of assembly, acetyl-CoA carboxylase is a heterohexamer composed of biotin carboxyl carrier protein (AccB), biotin carboxylase (AccC) and two subunits each of ACCase subunit alpha (AccA) and ACCase subunit beta (AccD). It depends on Zn(2+) as a cofactor.

The protein localises to the cytoplasm. It carries out the reaction N(6)-carboxybiotinyl-L-lysyl-[protein] + acetyl-CoA = N(6)-biotinyl-L-lysyl-[protein] + malonyl-CoA. Its pathway is lipid metabolism; malonyl-CoA biosynthesis; malonyl-CoA from acetyl-CoA: step 1/1. Functionally, component of the acetyl coenzyme A carboxylase (ACC) complex. Biotin carboxylase (BC) catalyzes the carboxylation of biotin on its carrier protein (BCCP) and then the CO(2) group is transferred by the transcarboxylase to acetyl-CoA to form malonyl-CoA. The sequence is that of Acetyl-coenzyme A carboxylase carboxyl transferase subunit beta from Exiguobacterium sp. (strain ATCC BAA-1283 / AT1b).